The following is a 379-amino-acid chain: Cytoplasmic tRNA 2-thiolation protein 1 (379 aa).

It belongs to the TtcA family. CTU1/NCS6/ATPBD3 subfamily.

It is found in the cytoplasm. The protein operates within tRNA modification; 5-methoxycarbonylmethyl-2-thiouridine-tRNA biosynthesis. Its function is as follows. Plays a central role in 2-thiolation of mcm(5)S(2)U at tRNA wobble positions of tRNA(Lys), tRNA(Glu) and tRNA(Gln). Directly binds tRNAs and probably acts by catalyzing adenylation of tRNAs, an intermediate required for 2-thiolation. It is unclear whether it acts as a sulfurtransferase that transfers sulfur from thiocarboxylated URM1 onto the uridine of tRNAs at wobble position. Prior mcm(5) tRNA modification by the elongator complex is required for 2-thiolation. May also be involved in protein urmylation. The chain is Cytoplasmic tRNA 2-thiolation protein 1 from Lodderomyces elongisporus (strain ATCC 11503 / CBS 2605 / JCM 1781 / NBRC 1676 / NRRL YB-4239) (Yeast).